The following is a 55-amino-acid chain: uncharacterized protein (55 aa).

The disordered stretch occupies residues 1-30 (MDKPTVETSAAPVETLVLTEPPAETQAEDS).

This is an uncharacterized protein from Frog virus 3 (isolate Goorha) (FV-3).